A 1337-amino-acid chain; its full sequence is MMEIQMDEGGGVVVYQDDYCSGSVMSERVSGLAGSIYREFERLIHCYDEEVVKELMPLVVNVLENLDSVLSENQEHEVELELLREDNEQLLTQYEREKALRKQAEEKFIEFEDALEQEKKELQIQVEHYEFQTRQLELKAKNYADQISRLEERESEMKKEYNALHQRHTEMIQTYVEHIERSKMQQVGGSGQTESSLPGRSRKERPTSLNVFPLADGMVRAQMGGKLVPAGDHWHLSDLGQLQSSSSYQCPNDEMSESGQSSAAATPSTTGTKSNTPTSSVPSAAVTPLNESLQPLGDYVSVTKNNKQAREKRNSRNMEVQVTQEMRNVSIGMGSSDEWSDVQDIIDSTPELDVCPETRLERTGSSPTQGIVNKAFGINTDSLYHELSTAGSEVIGDVDEGADLLGEFSVRDDFFGMGKEVGNLLLENSQLLETKNALNVVKNDLIAKVDQLSGEQEVLKGELEAAKQAKVKLENRIKELEEELKRVKSEAVTARREPREEVEDVSSYLCTELDKIPMAQRRRFTRVEMARVLMERNQYKERLMELQEAVRWTEMIRASREHPSVQEKKKSTIWQFFSRLFSSSSSPPPAKRSYPSVNIHYKSPTAAGFSQRRSHALCQISAGSRPLEFFPDDDCTSSARREQKREQYRQVREHVRNDDGRLQACGWSLPAKYKQLSPNGGQEDTRMKNVPVPVYCRPLVEKDPSTKLWCAAGVNLSGWKPHEEDSSNGPKPVPGRDPLTCDREGEGEPKSTHPSPEKKKAKETPEADATSSRVWILTSTLTTSKVVIIDANQPGTIVDQFTVCNAHVLCISSIPAASDSDYPPGEMFLDSDVNPEDSGADGVLAGITLVGCATRCNVPRSNCSSRGDTPVLDKGQGDVATTANGKVNPSQSTEEATEATEVPDPGPSESEATTVRPGPLTEHVFTDPAPTPSSSTQPASENGSESNGTIVQPQVEPSGELSTTTSSAAPTMWLGAQNGWLYVHSAVANWKKCLHSIKLKDSVLSLVHVKGRVLVALADGTLAIFHRGEDGQWDLSNYHLMDLGHPHHSIRCMAVVNDRVWCGYKNKVHVIQPKTMQIEKSFDAHPRRESQVRQLAWIGDGVWVSIRLDSTLRLYHAHTHQHLQDVDIEPYVSKMLGTGKLGFSFVRITALLIAGNRLWVGTGNGVVISIPLTETVVLHRGQLLGLRANKTSPTSGEGTRPGGIIHVYGDDSSDKAASSFIPYCSMAQAQLCFHGHRDAVKFFVSVPGNVLATLNGSVLDSPSEGPGPAAPAADAEGQKLKNALVLSGGEGYIDFRIGDGEDDETEECAGDVNQTKPSLSKAERSHIIVWQVSYTPE.

The region spanning 12-100 is the RH1 domain; sequence VVVYQDDYCS…LTQYEREKAL (89 aa). The kinesin-binding domain (KBD); essential for its function in axon elongation stretch occupies residues 50–80; that stretch reads EVVKELMPLVVNVLENLDSVLSENQEHEVEL. Positions 58–177 form a coiled coil; it reads LVVNVLENLD…HTEMIQTYVE (120 aa). Disordered stretches follow at residues 183–211 and 245–285; these read KMQQVGGSGQTESSLPGRSRKERPTSLNV and SSSY…PSAA. Polar residues predominate over residues 184 to 198; the sequence is MQQVGGSGQTESSLP. The JNK-binding domain (JBD); essential for its function in axon elongation stretch occupies residues 210–226; sequence NVFPLADGMVRAQMGGK. A compositionally biased stretch (low complexity) spans 261 to 270; sequence SSAAATPSTT. A phosphothreonine; by MAPK mark is found at Thr266, Thr276, and Thr287. Polar residues predominate over residues 271–282; that stretch reads GTKSNTPTSSVP. Phosphoserine; by ROCK1 occurs at positions 315 and 365. Ser366 is modified (phosphoserine). A leucine zipper-like domain (LZ); essential for its function in axon elongation region spans residues 424-459; it reads LLLENSQLLETKNALNVVKNDLIAKVDQLSGEQEVL. A coiled-coil region spans residues 437-555; the sequence is ALNVVKNDLI…LQEAVRWTEM (119 aa). The interaction with NTRK2 stretch occupies residues 459-515; sequence LKGELEAAKQAKVKLENRIKELEEELKRVKSEAVTARREPREEVEDVSSYLCTELDK. Residues 521-595 form the RH2 domain; that stretch reads RRRFTRVEMA…SPPPAKRSYP (75 aa). Ser603 carries the post-translational modification Phosphoserine. The disordered stretch occupies residues 633 to 655; it reads DDCTSSARREQKREQYRQVREHV. Residues 639–655 show a composition bias toward basic and acidic residues; sequence ARREQKREQYRQVREHV. Residue Ser677 is modified to Phosphoserine. Disordered stretches follow at residues 719–772 and 859–966; these read WKPH…ATSS and PRSN…TTTS. Residues 739–765 are compositionally biased toward basic and acidic residues; the sequence is LTCDREGEGEPKSTHPSPEKKKAKETP. Composition is skewed to polar residues over residues 879-892 and 941-952; these read VATTANGKVNPSQS and ENGSESNGTIVQ.

The protein belongs to the JIP scaffold family. As to quaternary structure, forms homo- or heterooligomeric complexes. The central region of MAPK8IP3 interacts with the C-terminal of MAPK8IP2 but not MAPK8IP1. Binds specific components of the JNK signaling pathway namely MAPK8/JNK1, MAPK9/JNK2 and MAPK10/JNK3 to the N-terminal region, MAP2K4/MKK4 and MAP2K7/MKK7 to the central region and MAP3K11 to the C-terminal region. Binds the TPR motif-containing C-terminal of kinesin light chain, KLC1. Pre-assembled MAPK8IP1 scaffolding complexes are then transported as a cargo of kinesin, to the required subcellular location. Interacts with ROCK1 and this interaction is enhanced by ultraviolet-B (UVB) radiation. Interacts with SH3RF2. Interacts with NTRK2/TRKB and NTRK3/TRKC. Post-translationally, phosphorylation by ROCK1 is crucial for the recruitment of JNK. In terms of tissue distribution, highly expressed throughout many regions of the brain and at lower levels in the heart, liver, lung, testes and kidney. All isoforms have been identified in the brain, isoform 1a is also expressed in the spleen and lung.

Its subcellular location is the cytoplasm. The protein resides in the golgi apparatus. It localises to the cytoplasmic vesicle. The protein localises to the cell projection. It is found in the growth cone. Its subcellular location is the axon. The protein resides in the dendrite. It localises to the perinuclear region. Functionally, the JNK-interacting protein (JIP) group of scaffold proteins selectively mediates JNK signaling by aggregating specific components of the MAPK cascade to form a functional JNK signaling module. May function as a regulator of vesicle transport, through interactions with the JNK-signaling components and motor proteins. Promotes neuronal axon elongation in a kinesin- and JNK-dependent manner. Activates cofilin at axon tips via local activation of JNK, thereby regulating filopodial dynamics and enhancing axon elongation. Its binding to kinesin heavy chains (KHC), promotes kinesin-1 motility along microtubules and is essential for axon elongation and regeneration. Regulates cortical neuronal migration by mediating NTRK2/TRKB anterograde axonal transport during brain development. Acts as an adapter that bridges the interaction between NTRK2/TRKB and KLC1 and drives NTRK2/TRKB axonal but not dendritic anterograde transport, which is essential for subsequent BDNF-triggered signaling and filopodia formation. This Mus musculus (Mouse) protein is C-Jun-amino-terminal kinase-interacting protein 3 (Mapk8ip3).